The sequence spans 193 residues: DNA damage-inducible transcript 4-like protein (193 aa).

Belongs to the DDIT4 family.

The protein localises to the cytoplasm. In terms of biological role, inhibits cell growth by regulating the TOR signaling pathway upstream of the TSC1-TSC2 complex and downstream of AKT1. This Mus musculus (Mouse) protein is DNA damage-inducible transcript 4-like protein (Ddit4l).